Consider the following 341-residue polypeptide: Cysteine and histidine-rich domain-containing protein 1 (341 aa).

Cysteine 5, cysteine 10, cysteine 24, histidine 27, cysteine 42, cysteine 43, cysteine 59, histidine 64, cysteine 155, cysteine 160, cysteine 174, histidine 177, cysteine 192, cysteine 193, cysteine 209, and histidine 214 together coordinate Zn(2+). CHORD domains follow at residues 5-64 (CYNK…KGPH) and 155-214 (CKNG…RGKH). The interval 61–81 (KGPHNQEKPAEPVKPEVKSSL) is disordered. A compositionally biased stretch (basic and acidic residues) spans 64–81 (HNQEKPAEPVKPEVKSSL). Positions 225–314 (VVPCRFDWHQ…AEPMSWARLD (90 aa)) constitute a CS domain. A disordered region spans residues 313–341 (LDLPPVAPPKEKEKEKDVDSEDECDDDED). Residues 330-341 (VDSEDECDDDED) show a composition bias toward acidic residues.

Regulates centrosome duplication. The polypeptide is Cysteine and histidine-rich domain-containing protein 1 (chordc1) (Danio rerio (Zebrafish)).